The primary structure comprises 804 residues: Cell surface sensor MSB2 (804 aa).

The first 20 residues, 1-20 (MHNFSKLAVAFVAAASFASA), serve as a signal peptide directing secretion. Residues 21 to 694 (EPETKAKVER…TNQSATQRGT (674 aa)) are Extracellular-facing. Residue asparagine 45 is glycosylated (N-linked (GlcNAc...) asparagine). Low complexity-rich tracts occupy residues 46–58 (TTTP…SSTS) and 69–80 (SSFSSSASSSSA). 2 disordered regions span residues 46 to 90 (TTTP…RQPT) and 105 to 220 (TDST…ATSN). The serine/threonine rich region (STR) stretch occupies residues 46-475 (TTTPASEASS…SVAPTSATSS (430 aa)). Composition is skewed to polar residues over residues 81-90 (QELTASRQPT) and 109-126 (PFSQ…SATG). Low complexity-rich tracts occupy residues 128–143 (VTPI…PSTA) and 150–169 (SALT…SVTS). Asparagine 157 carries N-linked (GlcNAc...) asparagine glycosylation. The segment covering 170–188 (PGSTSGPAGTPESSSASDF) has biased composition (polar residues). Low complexity predominate over residues 189–202 (TSAVATSRASTATS). N-linked (GlcNAc...) asparagine glycans are attached at residues asparagine 298, asparagine 308, asparagine 357, and asparagine 393. Positions 345–394 (VQTLPPVSTPTANGTVTSPPVDSQTTVLPTTTPGLSSDTIVTSPGVTANS) are enriched in polar residues. The segment at 345–516 (VQTLPPVSTP…APTVLPSDLP (172 aa)) is disordered. Composition is skewed to low complexity over residues 395–407 (TQVP…TIPT) and 427–476 (NNTV…TSSA). N-linked (GlcNAc...) asparagine glycosylation is found at asparagine 427 and asparagine 433. Residues 482–641 (WLPTTIIVQA…NGMLAHNLTM (160 aa)) are HKR11-MSB2 homology domain (HMH). A compositionally biased stretch (polar residues) spans 493 to 508 (LPSTTGSSTNAPSSAP). N-linked (GlcNAc...) asparagine glycosylation is found at asparagine 629, asparagine 638, asparagine 669, asparagine 683, and asparagine 686. The interval 658-689 (KPAGAGSGTGGNGSNGPNDVFNNDNNSTNQSA) is disordered. Gly residues predominate over residues 660–671 (AGAGSGTGGNGS). The segment covering 672 to 686 (NGPNDVFNNDNNSTN) has biased composition (low complexity). A helical transmembrane segment spans residues 695 to 715 (VAGIAFGAVSLAAAYGAAMFI). Over 716 to 804 (VARRYKKKRQ…VAQENSLGWN (89 aa)) the chain is Cytoplasmic. Disordered regions lie at residues 724 to 748 (RQAH…PALM) and 762 to 804 (GVMG…LGWN). Over residues 731 to 744 (SSVATPSEMRQSGS) the composition is skewed to polar residues. The span at 774–787 (GSNGSGRSAGNSAR) shows a compositional bias: low complexity.

This sequence belongs to the HKR1/MSB2 family.

The protein localises to the cell membrane. It localises to the vacuole membrane. Its function is as follows. MSB2 and SHO1 have overlapping functions in recognizing various surface signals for MAPK PMK1 activation and appressorium formation. While MSB2 is critical for sensing surface hydrophobicity and cutin monomers, SHO1 may play a more important role in recognizing rice leaf waxes. This is Cell surface sensor MSB2 from Pyricularia oryzae (strain 70-15 / ATCC MYA-4617 / FGSC 8958) (Rice blast fungus).